Consider the following 212-residue polypeptide: Methylthioribulose-1-phosphate dehydratase (212 aa).

2 residues coordinate Zn(2+): His97 and His99.

Belongs to the aldolase class II family. MtnB subfamily. Homotetramer. Zn(2+) serves as cofactor.

It catalyses the reaction 5-(methylsulfanyl)-D-ribulose 1-phosphate = 5-methylsulfanyl-2,3-dioxopentyl phosphate + H2O. It participates in amino-acid biosynthesis; L-methionine biosynthesis via salvage pathway; L-methionine from S-methyl-5-thio-alpha-D-ribose 1-phosphate: step 2/6. In terms of biological role, catalyzes the dehydration of methylthioribulose-1-phosphate (MTRu-1-P) into 2,3-diketo-5-methylthiopentyl-1-phosphate (DK-MTP-1-P). The protein is Methylthioribulose-1-phosphate dehydratase of Bacillus cereus (strain ATCC 10987 / NRS 248).